The primary structure comprises 879 residues: Alanine--tRNA ligase (879 aa).

The Zn(2+) site is built by His-566, His-570, Cys-668, and His-672.

It belongs to the class-II aminoacyl-tRNA synthetase family. It depends on Zn(2+) as a cofactor.

It is found in the cytoplasm. The enzyme catalyses tRNA(Ala) + L-alanine + ATP = L-alanyl-tRNA(Ala) + AMP + diphosphate. Catalyzes the attachment of alanine to tRNA(Ala) in a two-step reaction: alanine is first activated by ATP to form Ala-AMP and then transferred to the acceptor end of tRNA(Ala). Also edits incorrectly charged Ser-tRNA(Ala) and Gly-tRNA(Ala) via its editing domain. The chain is Alanine--tRNA ligase from Halalkalibacterium halodurans (strain ATCC BAA-125 / DSM 18197 / FERM 7344 / JCM 9153 / C-125) (Bacillus halodurans).